We begin with the raw amino-acid sequence, 36 residues long: Neurotoxin PRTx26An0C3 (36 aa).

Intrachain disulfides connect Cys3/Cys17, Cys10/Cys22, and Cys16/Cys34.

In terms of tissue distribution, expressed by the venom gland.

Its subcellular location is the secreted. Neurotoxin. Causes spastic paralysis and death in mice. Moderate inhibitor of L-type calcium channels (Cav1/CACNA1). This Phoneutria nigriventer (Brazilian armed spider) protein is Neurotoxin PRTx26An0C3.